The following is a 708-amino-acid chain: Leukotoxin translocation ATP-binding protein LktB (708 aa).

Residues 1–126 (MEVNHQSNDL…SCYQGKIILV (126 aa)) form the Peptidase C39 domain. Residues 155–437 (FLETLLVSIF…LAQLWQDFTQ (283 aa)) form the ABC transmembrane type-1 domain. Transmembrane regions (helical) follow at residues 159–179 (LLVS…FQVV), 192–212 (LNII…LSGL), 270–290 (ALTS…MWYY), 296–316 (LVIL…SPIL), and 389–409 (VMVI…LSIG). Positions 469 to 704 (IAFKNIRFRY…NNGLYSYLHQ (236 aa)) constitute an ABC transporter domain. 503-510 (GRSGSGKS) is an ATP binding site.

The protein belongs to the ABC transporter superfamily. Protein-1 exporter (TC 3.A.1.109) family. Homodimer.

The protein localises to the cell inner membrane. It carries out the reaction ATP + H2O + proteinSide 1 = ADP + phosphate + proteinSide 2.. Its function is as follows. Part of the ABC transporter complex LktBD involved in leukotoxin export. Transmembrane domains (TMD) form a pore in the inner membrane and the ATP-binding domain (NBD) is responsible for energy generation. The sequence is that of Leukotoxin translocation ATP-binding protein LktB (lktB) from Pasteurella haemolytica-like sp. (strain 5943B).